Reading from the N-terminus, the 271-residue chain is Thiamine thiazole synthase (271 aa).

Residues S39, 58-59 (ER), G66, V130, and 158-160 (HVD) contribute to the NAD(+) site. Fe cation contacts are provided by D160 and H175. Position 225 (M225) interacts with NAD(+). R235 provides a ligand contact to glycine.

The protein belongs to the THI4 family. As to quaternary structure, homooctamer; tetramer of dimers. Requires Fe(2+) as cofactor.

It catalyses the reaction hydrogen sulfide + glycine + NAD(+) = ADP-5-ethyl-4-methylthiazole-2-carboxylate + nicotinamide + 3 H2O + H(+). It functions in the pathway cofactor biosynthesis; thiamine diphosphate biosynthesis. Functionally, involved in the biosynthesis of the thiazole moiety of thiamine. Catalyzes the conversion of NAD and glycine to adenosine diphosphate 5-(2-hydroxyethyl)-4-methylthiazole-2-carboxylate (ADT), an adenylated thiazole intermediate, using free sulfide as a source of sulfur. The sequence is that of Thiamine thiazole synthase from Metallosphaera sedula (strain ATCC 51363 / DSM 5348 / JCM 9185 / NBRC 15509 / TH2).